The following is a 167-amino-acid chain: Antibacterial peptide PMAP-37 (167 aa).

The N-terminal stretch at 1–29 (METQRASLCLGRWSLWLLLLALVVPSASA) is a signal peptide. Positions 30–130 (QALSYREAVL…DITCNEIQSV (101 aa)) are excised as a propeptide. 2 disulfides stabilise this stretch: Cys85–Cys96 and Cys107–Cys124.

This sequence belongs to the cathelicidin family.

The protein localises to the secreted. Its function is as follows. Exerts antimicrobial activity against both Gram-positive and negative bacteria with minimal inhibitory concentrations ranging over 1-4 micro molar. Its activity appears to be mediated by its ability to damage bacterial membranes. The chain is Antibacterial peptide PMAP-37 (PMAP37) from Sus scrofa (Pig).